A 211-amino-acid chain; its full sequence is tRNA (guanine-N(7)-)-methyltransferase (211 aa).

Residues E44, D69, D96, and D118 each coordinate S-adenosyl-L-methionine. D118 is an active-site residue. K122 serves as a coordination point for substrate. The tract at residues 124-129 is interaction with RNA; that stretch reads KHEKRR. Substrate contacts are provided by residues D154 and 191–194; that span reads TEYE.

It belongs to the class I-like SAM-binding methyltransferase superfamily. TrmB family.

The enzyme catalyses guanosine(46) in tRNA + S-adenosyl-L-methionine = N(7)-methylguanosine(46) in tRNA + S-adenosyl-L-homocysteine. It participates in tRNA modification; N(7)-methylguanine-tRNA biosynthesis. Catalyzes the formation of N(7)-methylguanine at position 46 (m7G46) in tRNA. The protein is tRNA (guanine-N(7)-)-methyltransferase of Streptococcus pyogenes serotype M6 (strain ATCC BAA-946 / MGAS10394).